The primary structure comprises 430 residues: Agropine synthesis reductase (430 aa).

203-227 (LISGPSRGIGKAIAENLIAHGYRMS) contributes to the NAD(+) binding site. A substrate-binding site is contributed by Ser-333. The Proton acceptor role is filled by Tyr-346.

This sequence belongs to the short-chain dehydrogenases/reductases (SDR) family.

It functions in the pathway opine metabolism; mannopine biosynthesis. Reduces deoxy-fructosyl-glutamine to mannopine. In Rhizobium rhizogenes (Agrobacterium rhizogenes), this protein is Agropine synthesis reductase (mas1).